The following is a 104-amino-acid chain: Flagellar hook-basal body complex protein FliE (104 aa).

It belongs to the FliE family.

Its subcellular location is the bacterial flagellum basal body. The polypeptide is Flagellar hook-basal body complex protein FliE (Enterobacter sp. (strain 638)).